Reading from the N-terminus, the 427-residue chain is Pre-mRNA-splicing factor PRP46 (427 aa).

WD repeat units lie at residues glycine 113 to threonine 153, alanine 156 to asparagine 195, glycine 198 to threonine 237, glycine 240 to threonine 281, histidine 283 to valine 322, glutamine 324 to threonine 362, and glutamate 373 to threonine 412. The segment at glutamine 404 to leucine 427 is disordered.

The protein belongs to the WD repeat PRL1/PRL2 family. In terms of assembly, associated with the spliceosome.

It localises to the cytoplasm. It is found in the nucleus. Its function is as follows. Involved in pre-mRNA splicing and required for cell cycle progression at G2/M. The polypeptide is Pre-mRNA-splicing factor PRP46 (PRP46) (Candida glabrata (strain ATCC 2001 / BCRC 20586 / JCM 3761 / NBRC 0622 / NRRL Y-65 / CBS 138) (Yeast)).